A 392-amino-acid chain; its full sequence is Methylthioribose-1-phosphate isomerase (392 aa).

Aspartate 267 functions as the Proton donor in the catalytic mechanism.

Belongs to the eIF-2B alpha/beta/delta subunits family. MtnA subfamily.

It localises to the cytoplasm. It is found in the nucleus. The enzyme catalyses 5-(methylsulfanyl)-alpha-D-ribose 1-phosphate = 5-(methylsulfanyl)-D-ribulose 1-phosphate. It functions in the pathway amino-acid biosynthesis; L-methionine biosynthesis via salvage pathway; L-methionine from S-methyl-5-thio-alpha-D-ribose 1-phosphate: step 1/6. In terms of biological role, catalyzes the interconversion of methylthioribose-1-phosphate (MTR-1-P) into methylthioribulose-1-phosphate (MTRu-1-P). The polypeptide is Methylthioribose-1-phosphate isomerase (Blastomyces gilchristii (strain SLH14081) (Blastomyces dermatitidis)).